Reading from the N-terminus, the 92-residue chain is UPF0473 protein OB2006 (92 aa).

Belongs to the UPF0473 family.

In Oceanobacillus iheyensis (strain DSM 14371 / CIP 107618 / JCM 11309 / KCTC 3954 / HTE831), this protein is UPF0473 protein OB2006.